The sequence spans 171 residues: uncharacterized protein (171 aa).

The first 20 residues, 1 to 20, serve as a signal peptide directing secretion; that stretch reads MRRVLFSCFCGLLWSSSGWA. The cysteines at positions 40 and 80 are disulfide-linked.

This sequence belongs to the fimbrial protein family.

Its subcellular location is the fimbrium. Its function is as follows. Part of the sfmACDHF fimbrial operon. Could contribute to adhesion to various surfaces in specific environmental niches. Increases adhesion to eukaryotic T24 bladder epithelial cells in the absence of fim genes. This is an uncharacterized protein from Escherichia coli (strain K12).